An 80-amino-acid chain; its full sequence is Teretoxin Tsu6.5 (80 aa).

The signal sequence occupies residues 1–21 (MAINGRLLCLCLVLGLVFESL). The propeptide occupies 22 to 42 (GHPSVQEKRAAEDSKPSGERR).

This sequence belongs to the teretoxin M (TM) superfamily. Post-translationally, contains 3 disulfide bonds. In terms of tissue distribution, expressed by the venom duct.

Its subcellular location is the secreted. The polypeptide is Teretoxin Tsu6.5 (Terebra subulata (Chocolate spotted auger)).